The chain runs to 413 residues: Cell wall mannoprotein HSP150 (413 aa).

The first 18 residues, 1–18, serve as a signal peptide directing secretion; the sequence is MQYKKTLVASALAATTLA. Positions 19–72 are excised as a propeptide; sequence AYAPSEPWSTLTPTATYSGGVTDYASTFGIAVQPISTTSSASSAATTASSKAKR. 11 PIR1/2/3 repeats span residues 73–89, 97–115, 116–134, 140–158, 164–182, 188–206, 207–225, 226–244, 245–263, 264–282, and 283–300; these read AASQ…TTTA, AAAV…TKTT, AAAV…TTTL, and QAAS…TATS.

This sequence belongs to the PIR protein family. Covalently linked to beta-1,3-glucan of the inner cell wall layer via an alkali-sensitive ester linkage between the gamma-carboxyl group of glutamic acids, arising from specific glutamines within the PIR1/2/3 repeats, and hydroxyl groups of glucoses of beta-1,3-glucan chains. Post-translationally, the propeptide is cleaved off in the late Golgi. While both peptides are secreted, only a fraction of the mature glycoprotein is incorporated into the cell wall. In terms of processing, O-glycosylated. Extensively O-mannosylated.

The protein localises to the secreted. It localises to the cell wall. Component of the outer cell wall layer. Required for stability of the cell wall and for optimal growth. Required for resistance against several antifungal and cell wall-perturbing agents and for tolerance to heat shock. The polypeptide is Cell wall mannoprotein HSP150 (HSP150) (Saccharomyces cerevisiae (strain ATCC 204508 / S288c) (Baker's yeast)).